Reading from the N-terminus, the 61-residue chain is Small ribosomal subunit protein uS14B (61 aa).

Zn(2+) is bound by residues C24, C27, C40, and C43.

This sequence belongs to the universal ribosomal protein uS14 family. Zinc-binding uS14 subfamily. Part of the 30S ribosomal subunit. Contacts proteins S3 and S10. The cofactor is Zn(2+).

In terms of biological role, binds 16S rRNA, required for the assembly of 30S particles and may also be responsible for determining the conformation of the 16S rRNA at the A site. This Staphylococcus saprophyticus subsp. saprophyticus (strain ATCC 15305 / DSM 20229 / NCIMB 8711 / NCTC 7292 / S-41) protein is Small ribosomal subunit protein uS14B.